The chain runs to 270 residues: Transmembrane protein 176B (270 aa).

4 helical membrane passes run 65 to 85 (LALG…GVCL), 95 to 115 (ASGC…GAIV), 127 to 147 (VSSL…VLCV), and 209 to 229 (LFLA…GVGL). Phosphoserine is present on residues Ser-236, Ser-245, Ser-254, and Ser-258. Residues 237–270 (SQPLNEEGSEKRLLGENSVPPSPSREQTSTAIVL) are disordered. Residues 260–270 (SREQTSTAIVL) show a composition bias toward polar residues.

Belongs to the TMEM176 family.

The protein resides in the nucleus membrane. May play a role in the process of maturation of dendritic cells. Required for the development of cerebellar granule cells. The polypeptide is Transmembrane protein 176B (TMEM176B) (Pongo abelii (Sumatran orangutan)).